Consider the following 90-residue polypeptide: uncharacterized protein (90 aa).

Its subcellular location is the cytoplasm. This is an uncharacterized protein from Saccharomyces cerevisiae (strain ATCC 204508 / S288c) (Baker's yeast).